Here is a 381-residue protein sequence, read N- to C-terminus: Lipid-A-disaccharide synthase (381 aa).

The protein belongs to the LpxB family.

The enzyme catalyses a lipid X + a UDP-2-N,3-O-bis[(3R)-3-hydroxyacyl]-alpha-D-glucosamine = a lipid A disaccharide + UDP + H(+). The protein operates within bacterial outer membrane biogenesis; LPS lipid A biosynthesis. In terms of biological role, condensation of UDP-2,3-diacylglucosamine and 2,3-diacylglucosamine-1-phosphate to form lipid A disaccharide, a precursor of lipid A, a phosphorylated glycolipid that anchors the lipopolysaccharide to the outer membrane of the cell. The chain is Lipid-A-disaccharide synthase from Rickettsia bellii (strain OSU 85-389).